We begin with the raw amino-acid sequence, 473 residues long: 3-isopropylmalate dehydratase large subunit (473 aa).

The [4Fe-4S] cluster site is built by Cys-354, Cys-414, and Cys-417.

The protein belongs to the aconitase/IPM isomerase family. LeuC type 1 subfamily. In terms of assembly, heterodimer of LeuC and LeuD. [4Fe-4S] cluster is required as a cofactor.

It catalyses the reaction (2R,3S)-3-isopropylmalate = (2S)-2-isopropylmalate. The protein operates within amino-acid biosynthesis; L-leucine biosynthesis; L-leucine from 3-methyl-2-oxobutanoate: step 2/4. Its function is as follows. Catalyzes the isomerization between 2-isopropylmalate and 3-isopropylmalate, via the formation of 2-isopropylmaleate. The chain is 3-isopropylmalate dehydratase large subunit from Rhodopseudomonas palustris (strain BisB18).